The primary structure comprises 336 residues: Heme A synthase (336 aa).

The next 8 helical transmembrane spans lie at 12-32, 97-117, 130-150, 161-181, 194-214, 256-276, 285-305, and 310-330; these read LKLW…VGGL, LLAR…TLYF, IFFL…SGLI, SIHL…ILDI, LFLL…AFLS, FLHR…NFIY, YVLF…ITLI, and ITYA…YFLI. H258 serves as a coordination point for heme. H316 contributes to the heme binding site.

This sequence belongs to the COX15/CtaA family. Type 2 subfamily. Interacts with CtaB. Requires heme b as cofactor.

Its subcellular location is the cell membrane. The catalysed reaction is Fe(II)-heme o + 2 A + H2O = Fe(II)-heme a + 2 AH2. Its pathway is porphyrin-containing compound metabolism; heme A biosynthesis; heme A from heme O: step 1/1. In terms of biological role, catalyzes the conversion of heme O to heme A by two successive hydroxylations of the methyl group at C8. The first hydroxylation forms heme I, the second hydroxylation results in an unstable dihydroxymethyl group, which spontaneously dehydrates, resulting in the formyl group of heme A. The sequence is that of Heme A synthase from Pelagibacter ubique (strain HTCC1062).